We begin with the raw amino-acid sequence, 336 residues long: Dihydroorotate dehydrogenase (quinone) (336 aa).

Residues 62-66 and Thr86 contribute to the FMN site; that span reads AGLDK. Lys66 contacts substrate. 111 to 115 contacts substrate; the sequence is NRMGF. FMN-binding residues include Asn139 and Asn172. A substrate-binding site is contributed by Asn172. The active-site Nucleophile is Ser175. A substrate-binding site is contributed by Asn177. Positions 217 and 245 each coordinate FMN. 246–247 provides a ligand contact to substrate; the sequence is NT. FMN contacts are provided by residues Gly268, Gly297, and 318–319; that span reads YS.

This sequence belongs to the dihydroorotate dehydrogenase family. Type 2 subfamily. In terms of assembly, monomer. It depends on FMN as a cofactor.

The protein localises to the cell membrane. It catalyses the reaction (S)-dihydroorotate + a quinone = orotate + a quinol. Its pathway is pyrimidine metabolism; UMP biosynthesis via de novo pathway; orotate from (S)-dihydroorotate (quinone route): step 1/1. Catalyzes the conversion of dihydroorotate to orotate with quinone as electron acceptor. The chain is Dihydroorotate dehydrogenase (quinone) from Escherichia coli (strain UTI89 / UPEC).